The chain runs to 105 residues: ATP synthase subunit c (105 aa).

The next 2 helical transmembrane spans lie at 37–57 and 82–102; these read IGAG…GYIF and SAIS…LIFV.

The protein belongs to the ATPase C chain family. In terms of assembly, F-type ATPases have 2 components, F(1) - the catalytic core - and F(0) - the membrane proton channel. F(1) has five subunits: alpha(3), beta(3), gamma(1), delta(1), epsilon(1). F(0) has three main subunits: a(1), b(2) and c(10-14). The alpha and beta chains form an alternating ring which encloses part of the gamma chain. F(1) is attached to F(0) by a central stalk formed by the gamma and epsilon chains, while a peripheral stalk is formed by the delta and b chains.

The protein resides in the cell membrane. F(1)F(0) ATP synthase produces ATP from ADP in the presence of a proton or sodium gradient. F-type ATPases consist of two structural domains, F(1) containing the extramembraneous catalytic core and F(0) containing the membrane proton channel, linked together by a central stalk and a peripheral stalk. During catalysis, ATP synthesis in the catalytic domain of F(1) is coupled via a rotary mechanism of the central stalk subunits to proton translocation. In terms of biological role, key component of the F(0) channel; it plays a direct role in translocation across the membrane. A homomeric c-ring of between 10-14 subunits forms the central stalk rotor element with the F(1) delta and epsilon subunits. The polypeptide is ATP synthase subunit c (Mycoplasma pneumoniae (strain ATCC 29342 / M129 / Subtype 1) (Mycoplasmoides pneumoniae)).